The chain runs to 304 residues: FTTQETITNANTAKQWFLKSAKDSKFVANHFVALSTNAKLVQEFGIDKANMFEFWDWVGGRYSLWSAIGMSIALNIGFENFEHLLSGAHWMDNHFKSTPIERNIPVILAVLGIWYGNFYGAETQALLPYDQYMHRFAAYFQQGDMESNGKYVVRAGDKVNYSTGPIVWGEPGTNGQHAFYQLIHQVPHHPCDFNSPVKSHNSELRDGLHHTILLSNFLAQTEALMKGKDRQTVEKELKAAGKSEDEIKSIGPHKEFTGNRPTNSIMVDTVTPFTLGAMIAMYEHKIFTQGIIWDINSYDQWGVE.

The active-site Proton donor is glutamate 146. Residue histidine 177 is part of the active site.

The protein belongs to the GPI family.

It is found in the cytoplasm. The enzyme catalyses alpha-D-glucose 6-phosphate = beta-D-fructose 6-phosphate. It participates in carbohydrate degradation; glycolysis; D-glyceraldehyde 3-phosphate and glycerone phosphate from D-glucose: step 2/4. The sequence is that of Glucose-6-phosphate isomerase (PGI) from Calanus finmarchicus (Calanus tonsus).